A 275-amino-acid polypeptide reads, in one-letter code: Dermonecrotic toxin SpeSicTox-betaIIA2v (275 aa).

His-5 is a catalytic residue. 2 residues coordinate Mg(2+): Glu-25 and Asp-27. His-41 acts as the Nucleophile in catalysis. 2 disulfides stabilise this stretch: Cys-45–Cys-51 and Cys-47–Cys-190. A Mg(2+)-binding site is contributed by Asp-85.

It belongs to the arthropod phospholipase D family. Class II subfamily. It depends on Mg(2+) as a cofactor. Expressed by the venom gland.

The protein localises to the secreted. The catalysed reaction is an N-(acyl)-sphingosylphosphocholine = an N-(acyl)-sphingosyl-1,3-cyclic phosphate + choline. It catalyses the reaction an N-(acyl)-sphingosylphosphoethanolamine = an N-(acyl)-sphingosyl-1,3-cyclic phosphate + ethanolamine. The enzyme catalyses a 1-acyl-sn-glycero-3-phosphocholine = a 1-acyl-sn-glycero-2,3-cyclic phosphate + choline. It carries out the reaction a 1-acyl-sn-glycero-3-phosphoethanolamine = a 1-acyl-sn-glycero-2,3-cyclic phosphate + ethanolamine. Its function is as follows. Dermonecrotic toxins cleave the phosphodiester linkage between the phosphate and headgroup of certain phospholipids (sphingolipid and lysolipid substrates), forming an alcohol (often choline) and a cyclic phosphate. This toxin acts on sphingomyelin (SM). It may also act on ceramide phosphoethanolamine (CPE), lysophosphatidylcholine (LPC) and lysophosphatidylethanolamine (LPE), but not on lysophosphatidylserine (LPS), and lysophosphatidylglycerol (LPG). It acts by transphosphatidylation, releasing exclusively cyclic phosphate products as second products. Induces dermonecrosis, hemolysis, increased vascular permeability, edema, inflammatory response, and platelet aggregation. The polypeptide is Dermonecrotic toxin SpeSicTox-betaIIA2v (Sicarius peruensis (Six-eyed sand spider)).